We begin with the raw amino-acid sequence, 265 residues long: Putative methyltransferase 235L (265 aa).

The signal sequence occupies residues 1-17; the sequence is MDICICYFFTILTTISC.

It belongs to the methyltransferase superfamily.

This chain is Putative methyltransferase 235L, found in Acheta domesticus (House cricket).